A 461-amino-acid chain; its full sequence is MEPGGDGAEDDVGAGIGPPAPGWCLRGRCRVGSQREDVGWWRSWLQQSYQAVKEKSSEALEFMKRDLTEFTQVVQRDTACTIAATASVVKEKLTTEGSSGATEKMKKGLSDFLGVISDTFAPSPDKTIDCDVITLMGTPSGTAEPYDGTKARLYSLQSDPATYCNEPDGPPELFDAWLSQFCLEEKKGEISELLVGSPSIRALYTKMVPAAVSHSEFWHRYFYKVHQLEQEQARRDALKQRAEQSISEEPGWEEEEEELAGVSPTSLKEAKVPVARPSTSPEGGPGPQSPCEENLVTPVEPPTEVTPSESSESVSLVTQIAKPPPASEAPALPKDLSQKLLEASLEEQDLAVDTGETGPPPRAQSKPHTPACRPSGPEPRPPARVETLREEILTDLRVFELNSDSGKSTPSNNGKKGSSTDISEDWEKDFDLDMTEEEVQMALSKVDASGELEDVEWEDWD.

Phosphoserine occurs at positions 123 and 197. Positions 177–229 (WLSQFCLEEKKGEISELLVGSPSIRALYTKMVPAAVSHSEFWHRYFYKVHQLE) constitute a BSD domain. The tract at residues 239 to 384 (KQRAEQSISE…SGPEPRPPAR (146 aa)) is disordered. Over residues 250–259 (PGWEEEEEEL) the composition is skewed to acidic residues. A compositionally biased stretch (low complexity) spans 295-318 (LVTPVEPPTEVTPSESSESVSLVT). Thr387 carries the post-translational modification Phosphothreonine. The segment at 398-430 (VFELNSDSGKSTPSNNGKKGSSTDISEDWEKDF) is disordered. Residues 402–421 (NSDSGKSTPSNNGKKGSSTD) are compositionally biased toward polar residues. Phosphoserine is present on residues Ser418, Ser419, and Ser449.

The chain is BSD domain-containing protein 1 (BSDC1) from Bos taurus (Bovine).